The primary structure comprises 276 residues: Undecaprenyl-diphosphatase (276 aa).

5 consecutive transmembrane segments (helical) span residues 84-104 (YRLGWYVIIGTIPICILGLFF), 115-135 (LWVVVTALVVFSGVIALAEYV), 188-208 (FGFLLAIPAVFASGLFSLPDA), 222-242 (QLLVATLIAFVLGLTAVAWLL), and 250-270 (MYWFVGYRVLVGTGMLVLLAT).

This sequence belongs to the UppP family.

The protein resides in the cell membrane. The catalysed reaction is di-trans,octa-cis-undecaprenyl diphosphate + H2O = di-trans,octa-cis-undecaprenyl phosphate + phosphate + H(+). Its function is as follows. Catalyzes the dephosphorylation of undecaprenyl diphosphate (UPP). Confers resistance to bacitracin. The protein is Undecaprenyl-diphosphatase of Mycobacterium bovis (strain ATCC BAA-935 / AF2122/97).